The primary structure comprises 390 residues: GTPase Obg (390 aa).

The 159-residue stretch at 1–159 (MKFVDEAVIR…RHLRLELLLL (159 aa)) folds into the Obg domain. Residues 22–42 (SFRTEKYVPRGGPDGGDGGDG) form a disordered region. Positions 33 to 42 (GPDGGDGGDG) are enriched in gly residues. The OBG-type G domain maps to 160–333 (ADVGMLGLPN…LTYNLMTTIE (174 aa)). GTP contacts are provided by residues 166-173 (GLPNAGKS), 191-195 (FTTLI), 213-216 (DIPG), 283-286 (NKVD), and 314-316 (SAL). Mg(2+) is bound by residues Ser-173 and Thr-193.

This sequence belongs to the TRAFAC class OBG-HflX-like GTPase superfamily. OBG GTPase family. Monomer. The cofactor is Mg(2+).

It localises to the cytoplasm. Its function is as follows. An essential GTPase which binds GTP, GDP and possibly (p)ppGpp with moderate affinity, with high nucleotide exchange rates and a fairly low GTP hydrolysis rate. Plays a role in control of the cell cycle, stress response, ribosome biogenesis and in those bacteria that undergo differentiation, in morphogenesis control. In Photobacterium profundum (strain SS9), this protein is GTPase Obg.